We begin with the raw amino-acid sequence, 420 residues long: Putative movement protein (420 aa).

2 stretches are compositionally biased toward low complexity: residues Met-1 to Ser-18 and Thr-30 to Pro-59. 6 disordered regions span residues Met-1 to Pro-77, Ser-137 to Ser-181, Arg-195 to Thr-219, Ile-235 to Pro-281, Pro-327 to Gln-370, and Leu-396 to Pro-420. Over residues Lys-60–Pro-69 the composition is skewed to pro residues. Positions Ser-137–Gly-157 are enriched in polar residues. Low complexity predominate over residues Ser-158–Ser-181. The span at Gly-253 to Gly-263 shows a compositional bias: polar residues. A compositionally biased stretch (low complexity) spans Pro-327–Ala-348.

In terms of biological role, cell-to-cell movement. The sequence is that of Putative movement protein from Maize rayado fino virus (isolate Costa Rica/Guapiles) (MRFV).